The primary structure comprises 447 residues: N-succinylarginine dihydrolase (447 aa).

Substrate is bound by residues 19–28 (AGLSFGNEAS), asparagine 110, and 137–138 (HR). The active site involves glutamate 174. Position 212 (arginine 212) interacts with substrate. Histidine 248 is a catalytic residue. Residues aspartate 250 and asparagine 359 each coordinate substrate. The Nucleophile role is filled by cysteine 365.

This sequence belongs to the succinylarginine dihydrolase family. Homodimer.

The enzyme catalyses N(2)-succinyl-L-arginine + 2 H2O + 2 H(+) = N(2)-succinyl-L-ornithine + 2 NH4(+) + CO2. Its pathway is amino-acid degradation; L-arginine degradation via AST pathway; L-glutamate and succinate from L-arginine: step 2/5. Its function is as follows. Catalyzes the hydrolysis of N(2)-succinylarginine into N(2)-succinylornithine, ammonia and CO(2). This chain is N-succinylarginine dihydrolase, found in Salmonella typhi.